The primary structure comprises 528 residues: Lysine--tRNA ligase (528 aa).

The 'HIGH' region signature appears at 36 to 44; that stretch reads PSGTVHIGN. A 'KMSKS' region motif is present at residues 287–291; the sequence is KMSSS.

This sequence belongs to the class-I aminoacyl-tRNA synthetase family.

The protein localises to the cytoplasm. The enzyme catalyses tRNA(Lys) + L-lysine + ATP = L-lysyl-tRNA(Lys) + AMP + diphosphate. This chain is Lysine--tRNA ligase (lysS), found in Treponema pallidum (strain Nichols).